We begin with the raw amino-acid sequence, 422 residues long: Aliphatic (R)-hydroxynitrile lyase (422 aa).

Positions 63, 85, 115, 118, 121, 129, and 199 each coordinate Zn(2+).

This sequence belongs to the zinc-containing alcohol dehydrogenase family. Homodimer. The cofactor is Zn(2+).

The enzyme catalyses (2R)-2-hydroxy-2-methylbutanenitrile = butan-2-one + hydrogen cyanide. Involved in the catabolism of cyanogenic glycosides. Naturally occurring substrates are the aliphatic acetone cyanohydrin and butan-2-one cyanohydrin, which are the aglycones of the cyanogenic glycosides linamarin, lotaustralin, linustatin and neolinustatin. Can use various aliphatic ketones and aldehydes as substrates, but not aromatic ketones. This chain is Aliphatic (R)-hydroxynitrile lyase, found in Linum usitatissimum (Flax).